Here is a 256-residue protein sequence, read N- to C-terminus: Pimeloyl-[acyl-carrier protein] methyl ester esterase (256 aa).

An AB hydrolase-1 domain is found at 15–242 (HLVLLHGWGL…AAHAPFISHP (228 aa)). Residues Trp22, 82-83 (SL), and 143-147 (FLALQ) each bind substrate. Ser82 (nucleophile) is an active-site residue. Active-site residues include Asp207 and His235. Substrate is bound at residue His235.

This sequence belongs to the AB hydrolase superfamily. Carboxylesterase BioH family. In terms of assembly, monomer.

The protein localises to the cytoplasm. The enzyme catalyses 6-carboxyhexanoyl-[ACP] methyl ester + H2O = 6-carboxyhexanoyl-[ACP] + methanol + H(+). The protein operates within cofactor biosynthesis; biotin biosynthesis. In terms of biological role, the physiological role of BioH is to remove the methyl group introduced by BioC when the pimeloyl moiety is complete. It allows to synthesize pimeloyl-ACP via the fatty acid synthetic pathway through the hydrolysis of the ester bonds of pimeloyl-ACP esters. The sequence is that of Pimeloyl-[acyl-carrier protein] methyl ester esterase from Escherichia coli O81 (strain ED1a).